Here is a 397-residue protein sequence, read N- to C-terminus: Tryptophan synthase beta chain (397 aa).

The residue at position 91 (Lys-91) is an N6-(pyridoxal phosphate)lysine.

The protein belongs to the TrpB family. As to quaternary structure, tetramer of two alpha and two beta chains. Pyridoxal 5'-phosphate serves as cofactor.

It carries out the reaction (1S,2R)-1-C-(indol-3-yl)glycerol 3-phosphate + L-serine = D-glyceraldehyde 3-phosphate + L-tryptophan + H2O. It participates in amino-acid biosynthesis; L-tryptophan biosynthesis; L-tryptophan from chorismate: step 5/5. In terms of biological role, the beta subunit is responsible for the synthesis of L-tryptophan from indole and L-serine. The sequence is that of Tryptophan synthase beta chain from Bacillus cereus (strain G9842).